The sequence spans 519 residues: Glucose-1-phosphate adenylyltransferase large subunit 3, chloroplastic/amyloplastic (519 aa).

The N-terminal 74 residues, 1–74, are a transit peptide targeting the chloroplast; the sequence is MQFSSVFPLE…DAGPDTLHVR (74 aa).

This sequence belongs to the bacterial/plant glucose-1-phosphate adenylyltransferase family. Heterotetramer composed of two small and two large subunits. In terms of tissue distribution, expressed in stems.

The protein localises to the plastid. Its subcellular location is the chloroplast. The enzyme catalyses alpha-D-glucose 1-phosphate + ATP + H(+) = ADP-alpha-D-glucose + diphosphate. The protein operates within glycan biosynthesis; starch biosynthesis. With respect to regulation, activated by 3'phosphoglycerate, inhibited by orthophosphate. Allosteric regulation. Functionally, involved in synthesis of starch. Catalyzes the synthesis of ADP-glucose, a molecule that serves as an activated glycosyl donor for alpha-1,4-glucan synthesis. Essential for starch synthesis in leaf chloroplasts. This is Glucose-1-phosphate adenylyltransferase large subunit 3, chloroplastic/amyloplastic from Oryza sativa subsp. japonica (Rice).